Here is a 360-residue protein sequence, read N- to C-terminus: Magnesium-protoporphyrin IX monomethyl ester [oxidative] cyclase (360 aa).

A disordered region spans residues 1–20; that stretch reads MVPPTAIAEASRSGGEPAIK.

The protein belongs to the AcsF family. Fe cation is required as a cofactor.

The catalysed reaction is Mg-protoporphyrin IX 13-monomethyl ester + 3 NADPH + 3 O2 + 2 H(+) = 3,8-divinyl protochlorophyllide a + 3 NADP(+) + 5 H2O. It functions in the pathway porphyrin-containing compound metabolism; chlorophyll biosynthesis (light-independent). Catalyzes the formation of the isocyclic ring in chlorophyll biosynthesis. Mediates the cyclase reaction, which results in the formation of divinylprotochlorophyllide (Pchlide) characteristic of all chlorophylls from magnesium-protoporphyrin IX 13-monomethyl ester (MgPMME). The polypeptide is Magnesium-protoporphyrin IX monomethyl ester [oxidative] cyclase (Synechococcus sp. (strain RCC307)).